A 438-amino-acid polypeptide reads, in one-letter code: Prenyltransferase malE (438 aa).

Residue glutamate 92 coordinates substrate. Arginine 106, lysine 192, tyrosine 194, lysine 259, tyrosine 261, tyrosine 346, and tyrosine 411 together coordinate dimethylallyl diphosphate.

This sequence belongs to the tryptophan dimethylallyltransferase family.

The enzyme catalyses (S)-3-(indol-3-ylmethyl)-6,7,8,8a-tetrahydropyrrolo[1,2-a]pyrazin-1-one + dimethylallyl diphosphate = (S)-3-{[2-(1,1-dimethylallyl)-indol-3-yl]methyl}-6,7,8,8a-tetrahydropyrrolo[1,2-a]pyrazin-1-one + diphosphate. It carries out the reaction 1-hydroxy-3-(indol-3-ylmethyl)-6H,7H,8H-5lambda(5)-pyrrolo[1,2-a]pyrazine + dimethylallyl diphosphate = 1-hydroxy-3-{[2-(1,1-dimethylallyl)-indol-3-yl]methyl}-6H,7H,8H-5lambda(5)-pyrrolo[1,2-a]pyrazine + diphosphate. It functions in the pathway alkaloid biosynthesis. Its function is as follows. Prenyltransferase; part of the gene cluster that mediates the biosynthesis of malbrancheamide, a dichlorinated fungal indole alkaloid that belongs to a family of natural products containing a characteristic bicyclo[2.2.2]diazaoctane core. The first step of malbrancheamide biosynthesis involves coupling of L-proline and L-tryptophan by malG, a bimodular NRPS, to produce L-Pro-L-Trp aldehyde through reductive offloading. This compound undergoes spontaneous cyclization and dehydration to give a dienamine which is reverse prenylated at C-2 by malE. The other prenyltransferase present in the cluster, malB, displays modest activity, suggesting that may be a redundant gene in the pathway. Subsequently, a [4+2] Diels-Alder cyclo-addition catalyzed by the bifunctional enzyme malC forms the characteristic bicyclo[2.2.2]diazaoctane ring of premalbrancheamid. Finally, the flavin-dependent halogenase malA catalyzes the iterative dichlorination of the indole ring of premalbrancheamide to yield C-9 monochlorinated malbrancheamide B, C-8 monochlorinated isomalbrancheamide B, and dichlorinated malbrancheamide. MalA is also able to brominate premalbrancheamide at C-9 to yield malbrancheamide C, and, to a lesser extend, at C-8 to yield isomalbrancheamide C. Finally, malA can brominate C-9 monochlorinated malbrancheamide B at C-8 to yield malbrancheamide D, or C-8 monochlorinated isomalbrancheamide B at C-9 to produce isomalbrancheamide D. This chain is Prenyltransferase malE, found in Malbranchea aurantiaca.